We begin with the raw amino-acid sequence, 345 residues long: Anthranilate phosphoribosyltransferase (345 aa).

5-phospho-alpha-D-ribose 1-diphosphate contacts are provided by residues Gly-79, 82–83 (GD), Thr-87, 89–92 (NVST), 106–114 (KHGNRAVSG), and Ser-118. Residue Gly-79 participates in anthranilate binding. Ser-91 contributes to the Mg(2+) binding site. Position 109 (Asn-109) interacts with anthranilate. Anthranilate is bound at residue Arg-164. The Mg(2+) site is built by Asp-223 and Glu-224.

Belongs to the anthranilate phosphoribosyltransferase family. Homodimer. Requires Mg(2+) as cofactor.

It catalyses the reaction N-(5-phospho-beta-D-ribosyl)anthranilate + diphosphate = 5-phospho-alpha-D-ribose 1-diphosphate + anthranilate. The protein operates within amino-acid biosynthesis; L-tryptophan biosynthesis; L-tryptophan from chorismate: step 2/5. In terms of biological role, catalyzes the transfer of the phosphoribosyl group of 5-phosphorylribose-1-pyrophosphate (PRPP) to anthranilate to yield N-(5'-phosphoribosyl)-anthranilate (PRA). In Saccharolobus islandicus (strain M.16.27) (Sulfolobus islandicus), this protein is Anthranilate phosphoribosyltransferase.